The following is a 107-amino-acid chain: U1-lycotoxin-Ls1f (107 aa).

The N-terminal stretch at 1 to 20 (MMKVLVVVALLVTLISYSSS) is a signal peptide. A propeptide spanning residues 21-41 (EGIDDLEADELLSLMANEQTR) is cleaved from the precursor. 4 cysteine pairs are disulfide-bonded: C44-C59, C51-C68, C58-C86, and C70-C84.

Belongs to the neurotoxin 19 (CSTX) family. 04 (U1-Lctx) subfamily. In terms of tissue distribution, expressed by the venom gland.

It is found in the secreted. This chain is U1-lycotoxin-Ls1f, found in Lycosa singoriensis (Wolf spider).